Reading from the N-terminus, the 357-residue chain is Phosphoribosylformylglycinamidine cyclo-ligase (357 aa).

This sequence belongs to the AIR synthase family.

The protein resides in the cytoplasm. It carries out the reaction 2-formamido-N(1)-(5-O-phospho-beta-D-ribosyl)acetamidine + ATP = 5-amino-1-(5-phospho-beta-D-ribosyl)imidazole + ADP + phosphate + H(+). Its pathway is purine metabolism; IMP biosynthesis via de novo pathway; 5-amino-1-(5-phospho-D-ribosyl)imidazole from N(2)-formyl-N(1)-(5-phospho-D-ribosyl)glycinamide: step 2/2. This Nitrobacter winogradskyi (strain ATCC 25391 / DSM 10237 / CIP 104748 / NCIMB 11846 / Nb-255) protein is Phosphoribosylformylglycinamidine cyclo-ligase.